Reading from the N-terminus, the 692-residue chain is uncharacterized protein (692 aa).

A chloroplast-targeting transit peptide spans 1–39 (MLRLPSSMPIVSFPANPNLLINPQPSWPSRRGNSAVVVS). A Protein kinase domain is found at 189-523 (EISPEPVAAA…RLESLLSESL (335 aa)). ATP-binding positions include 195–203 (VAAASLGQV) and Lys-218. The active-site Proton acceptor is Asp-343.

Belongs to the protein kinase superfamily. ADCK protein kinase family.

It is found in the plastid. It localises to the chloroplast. The protein resides in the plastoglobule. This is an uncharacterized protein from Arabidopsis thaliana (Mouse-ear cress).